A 198-amino-acid polypeptide reads, in one-letter code: Recombination protein RecR (198 aa).

A C4-type zinc finger spans residues 57–72 (CSVCGNLTDEDPCAIC). A Toprim domain is found at 80-175 (STILIVEDSR…KVTRLARGLA (96 aa)).

This sequence belongs to the RecR family.

In terms of biological role, may play a role in DNA repair. It seems to be involved in an RecBC-independent recombinational process of DNA repair. It may act with RecF and RecO. The polypeptide is Recombination protein RecR (Streptococcus sanguinis (strain SK36)).